The sequence spans 211 residues: Protein-L-isoaspartate O-methyltransferase (211 aa).

The active site involves Ser-60.

Belongs to the methyltransferase superfamily. L-isoaspartyl/D-aspartyl protein methyltransferase family.

The protein resides in the cytoplasm. It carries out the reaction [protein]-L-isoaspartate + S-adenosyl-L-methionine = [protein]-L-isoaspartate alpha-methyl ester + S-adenosyl-L-homocysteine. Its function is as follows. Catalyzes the methyl esterification of L-isoaspartyl residues in peptides and proteins that result from spontaneous decomposition of normal L-aspartyl and L-asparaginyl residues. It plays a role in the repair and/or degradation of damaged proteins. The sequence is that of Protein-L-isoaspartate O-methyltransferase from Pseudomonas savastanoi pv. phaseolicola (strain 1448A / Race 6) (Pseudomonas syringae pv. phaseolicola (strain 1448A / Race 6)).